An 824-amino-acid chain; its full sequence is MTRKSNYNYLDEDNIEDESPIGLGTSPIEFNLDKENKNKKRNSVKFNLDTPLPIINNKSSQDNNNKNNNNNNNNNNNNNNNNNNNNNNNNNNKNNKNKINNSLNSITPYLVDYKDDFDFKRSVYDFDDVDYLEEDSFDEHSFYKTSYSTRRCIYRILTYIRPQIWYFVFAFLALSITTLCQLALPYCFANGIQEAIRVNLTVNSVNSTDNNIIITPTPTPNITTTTTNPTVLESITSKYTSLFGNTEYDFKWIIIIVLVQTPFLFARYLLFTMAGFSVVTKLKRDLFKSLLTQEVSYFDSNRTGDLKAVIASDSSILQNCITVSLSTLVRCSLQLIGGLLILVFLSWKVTLLMISFLVILLISFLVFKKWIHPKYNYIQEKLVNIGLIIDDSIGNIKEIRLLNAESKELRSFETELEILHRSSRSFVLMNAFWISFGSLLVMGTIIGIYGFAMSQTLSNSILLLQFILYSLMITASMNGLIGSINEIQKLISSSKRIFSLIDRKPIVHFQGGITPSTDSNISFDNVYFNNNNNNSNNNNNNNNNNKNNNGMILSNVSFIVNKGQWLSLVGPSQSKEFIFSLIQGLYYPTRGTVFIGRIDTKVLDLYFFRSRLFTISPLQTVIFDGTVEQNIRYGLSHLSTQNIIDASKKANLHDFVIGLPHGYDSMIGKNNFFDPIQILKISIARAFLRNPSVLLLDETTLPFDSKEIEDSIELLVQNKTVIAIANKLSTLKRSNNILVFDDNRIIERGTHSELSQKSTSFYVTSVLNSINNKYNNNNNNNNNNNNNNNNNNNNNNNNNNNNNNNNNNNNINNNNKIEIYLFLI.

The tract at residues R41 to N101 is disordered. Low complexity predominate over residues N63–N101. 6 helical membrane passes run I164–L184, W252–T272, L325–L345, W347–F367, A431–F451, and I461–I481. Positions F167 to K489 constitute an ABC transmembrane type-1 domain. In terms of domain architecture, ABC transporter spans I521–L767. Residue G570–E576 participates in ATP binding. The interval N772–N813 is disordered.

Belongs to the ABC transporter superfamily. ABCB family.

Its subcellular location is the membrane. The sequence is that of ABC transporter B family member 7 (abcB7) from Dictyostelium discoideum (Social amoeba).